A 268-amino-acid polypeptide reads, in one-letter code: Tryptophan synthase alpha chain (268 aa).

Catalysis depends on proton acceptor residues Glu-49 and Asp-60.

It belongs to the TrpA family. In terms of assembly, tetramer of two alpha and two beta chains.

The enzyme catalyses (1S,2R)-1-C-(indol-3-yl)glycerol 3-phosphate + L-serine = D-glyceraldehyde 3-phosphate + L-tryptophan + H2O. Its pathway is amino-acid biosynthesis; L-tryptophan biosynthesis; L-tryptophan from chorismate: step 5/5. Functionally, the alpha subunit is responsible for the aldol cleavage of indoleglycerol phosphate to indole and glyceraldehyde 3-phosphate. In Escherichia coli (strain 55989 / EAEC), this protein is Tryptophan synthase alpha chain.